The chain runs to 690 residues: Elongation factor G (690 aa).

The region spanning 8-283 is the tr-type G domain; sequence EKYRNIGIMA…AVVDYLPSPL (276 aa). GTP-binding positions include 17–24, 81–85, and 135–138; these read AHIDAGKT, DTPGH, and NKLD.

It belongs to the TRAFAC class translation factor GTPase superfamily. Classic translation factor GTPase family. EF-G/EF-2 subfamily.

The protein resides in the cytoplasm. In terms of biological role, catalyzes the GTP-dependent ribosomal translocation step during translation elongation. During this step, the ribosome changes from the pre-translocational (PRE) to the post-translocational (POST) state as the newly formed A-site-bound peptidyl-tRNA and P-site-bound deacylated tRNA move to the P and E sites, respectively. Catalyzes the coordinated movement of the two tRNA molecules, the mRNA and conformational changes in the ribosome. This is Elongation factor G from Rhizorhabdus wittichii (strain DSM 6014 / CCUG 31198 / JCM 15750 / NBRC 105917 / EY 4224 / RW1) (Sphingomonas wittichii).